Consider the following 93-residue polypeptide: Chromosomal protein MC1 (93 aa).

Residues 1–43 form a disordered region; that stretch reads SNTRNFVLRDEEGNEHGVFTGKQPRQAALKAANRGDGTKSNPD.

In terms of biological role, protects DNA against thermal denaturation and modulates transcription. In Methanosarcina barkeri, this protein is Chromosomal protein MC1.